Consider the following 345-residue polypeptide: Calcium/calmodulin-dependent protein kinase type 1 (345 aa).

The interval Met-1–Lys-23 is disordered. One can recognise a Protein kinase domain in the interval Tyr-31–Ile-287. ATP-binding positions include Leu-37–Val-45 and Lys-61. Asp-153 functions as the Proton acceptor in the catalytic mechanism. The autoinhibitory domain stretch occupies residues Ile-287–Met-327. The interval Lys-307–Arg-328 is calmodulin-binding.

This sequence belongs to the protein kinase superfamily. CAMK Ser/Thr protein kinase family. CaMK subfamily. In terms of tissue distribution, highly expressed in hepatopancreas and to a lesser extent in gills. Low expression in hemocytes, testis, ovary, heart, eyestalk, muscle and epidermis.

It carries out the reaction L-seryl-[protein] + ATP = O-phospho-L-seryl-[protein] + ADP + H(+). The enzyme catalyses L-threonyl-[protein] + ATP = O-phospho-L-threonyl-[protein] + ADP + H(+). With respect to regulation, activated by Ca(2+)/calmodulin. Binding of calmodulin results in conformational change that relieves intrasteric autoinhibition. In terms of biological role, calcium/calmodulin-dependent protein kinase that operates in the calcium-triggered CaMKK-CaMK1 signaling cascade and, upon calcium influx, regulates transcription activators activity, cell cycle, hormone production, cell differentiation, actin filament organization and neurite outgrowth. Involved in molting. This is Calcium/calmodulin-dependent protein kinase type 1 from Macrobrachium nipponense (Oriental river shrimp).